The following is a 242-amino-acid chain: MFIAYLTAGAPDLNTTKQALLNLANDGADVIEIGVPYSDPLADGMILQKASQQALKNRFRLEQLWHLLAEIELPVPVVILAYYNQIFHYGVEKWVTTLVNLKVKALIVPDLPYEEAAILRAACARHHLHMIWLISPTTPKVRAKQLALACDDWIYLVSRTGVTGVDAHFDNQIPNMIAELKQVTTTPIALGFGIHQKQQLQLVKSWGADGVIIGTACMQILLEKGVDQLTEWISAMKKSSYP.

Residues E32 and D43 each act as proton acceptor in the active site.

The protein belongs to the TrpA family. In terms of assembly, tetramer of two alpha and two beta chains.

The protein localises to the plastid. Its subcellular location is the chloroplast. The catalysed reaction is (1S,2R)-1-C-(indol-3-yl)glycerol 3-phosphate + L-serine = D-glyceraldehyde 3-phosphate + L-tryptophan + H2O. Its pathway is amino-acid biosynthesis; L-tryptophan biosynthesis; L-tryptophan from chorismate: step 5/5. Functionally, the alpha subunit is responsible for the aldol cleavage of indoleglycerol phosphate to indole and glyceraldehyde 3-phosphate. In Cyanidium caldarium (Red alga), this protein is Tryptophan synthase alpha chain.